Reading from the N-terminus, the 220-residue chain is Fructose-6-phosphate aldolase 2 (220 aa).

Lysine 85 functions as the Schiff-base intermediate with substrate in the catalytic mechanism.

It belongs to the transaldolase family. Type 3A subfamily. As to quaternary structure, homodecamer.

It localises to the cytoplasm. The catalysed reaction is beta-D-fructose 6-phosphate = dihydroxyacetone + D-glyceraldehyde 3-phosphate. Functionally, catalyzes the reversible formation of fructose 6-phosphate from dihydroxyacetone and D-glyceraldehyde 3-phosphate via an aldolization reaction. The polypeptide is Fructose-6-phosphate aldolase 2 (fsaB) (Escherichia coli O6:H1 (strain CFT073 / ATCC 700928 / UPEC)).